A 102-amino-acid polypeptide reads, in one-letter code: Small ribosomal subunit protein uS17 (102 aa).

Residues 1 to 27 (MEQTEEHTDTHTDEQDEAVDRNDRKER) are disordered.

It belongs to the universal ribosomal protein uS17 family. Part of the 30S ribosomal subunit.

Functionally, one of the primary rRNA binding proteins, it binds specifically to the 5'-end of 16S ribosomal RNA. The protein is Small ribosomal subunit protein uS17 of Salinibacter ruber (strain DSM 13855 / M31).